A 20-amino-acid polypeptide reads, in one-letter code: Putative phosphoglycerate kinase (20 aa).

The protein belongs to the phosphoglycerate kinase family. Monomer.

It localises to the cytoplasm. It carries out the reaction (2R)-3-phosphoglycerate + ATP = (2R)-3-phospho-glyceroyl phosphate + ADP. It functions in the pathway carbohydrate degradation; glycolysis; pyruvate from D-glyceraldehyde 3-phosphate: step 2/5. In Clostridium pasteurianum, this protein is Putative phosphoglycerate kinase (pgk).